The primary structure comprises 320 residues: ATP-dependent 6-phosphofructokinase (320 aa).

Residue glycine 12 participates in ATP binding. ADP-binding positions include 22-26 (RGVVR) and 55-60 (RYSVSD). ATP contacts are provided by residues 73-74 (RF) and 103-106 (GDGS). A Mg(2+)-binding site is contributed by aspartate 104. 126-128 (TID) contributes to the substrate binding site. Catalysis depends on aspartate 128, which acts as the Proton acceptor. Arginine 155 lines the ADP pocket. Residues arginine 163 and 170–172 (MGR) contribute to the substrate site. ADP contacts are provided by residues 186 to 188 (GCE), lysine 212, and 214 to 216 (KKH). Substrate-binding positions include glutamate 223, arginine 244, and 250 to 253 (HIQR).

The protein belongs to the phosphofructokinase type A (PFKA) family. ATP-dependent PFK group I subfamily. Prokaryotic clade 'B1' sub-subfamily. As to quaternary structure, homotetramer. Mg(2+) is required as a cofactor.

The protein localises to the cytoplasm. It catalyses the reaction beta-D-fructose 6-phosphate + ATP = beta-D-fructose 1,6-bisphosphate + ADP + H(+). Its pathway is carbohydrate degradation; glycolysis; D-glyceraldehyde 3-phosphate and glycerone phosphate from D-glucose: step 3/4. With respect to regulation, allosterically activated by ADP and other diphosphonucleosides, and allosterically inhibited by phosphoenolpyruvate. Functionally, catalyzes the phosphorylation of D-fructose 6-phosphate to fructose 1,6-bisphosphate by ATP, the first committing step of glycolysis. This is ATP-dependent 6-phosphofructokinase from Salmonella agona (strain SL483).